Here is a 1154-residue protein sequence, read N- to C-terminus: MLDLTNFDRIRIGLASADHITTWSHGEVKKPETINYRTLKPERDGLFCERIFGPTRDWECYCGKYKRVRYKGIVCDRCGVEVTRSKVRRERLGHIKLAAPVSHIWYFKGIPSRMGLLLDMSPRALEKVLYFVSYIVTNPGDTPLFKKQLLTEQEYREFRDKYGTDFQAAMGAEAILQLLDEIDLNELAAELRQEIRDVTGQRRIRAIRRLEVVESFRKSQNSPSWMIMQVLPVIPPELRPMVQLDGGRFATSDLNDLYRRVINRNNRLKRLLELGAPDIIVRNEKRMLQEAVDALIDNGRRGRPVTGPGNRPLKSLSDMLKGKQGRFRQNLLGKRVDYSGRSVIVVGPSLKLHQCGLPKEMALELFKPFVMKRLVGDGHAHNIKSAKRKVERVRPEVWDVLEDVIKEHPVLLNRAPTLHRLGIQAFEPVLVEGRAIQIHPLVCTAYNADFDGDQMAVHVPLSAEAQAEARLLMLSTYNILNPKDGRPVTIPTQDMVLGIYYLTIERPGARGEGKAFRDVNEAILAYESGVIELHALVKVNMGDGRLLETTVGRLIFNEAMPPEISYINKLVDKKELSLIVDRCYRRLGYKRTAELLDGIKQLGFKYATQGGLTIGMNDIVIPERKKEILGEAESHVEMIEDQYRRGLITFDEKYRQTIETWNRATELVTQELLNTLDRFNPVYMMATSGARGNIQQIRQLAGLRGLMADPSGRIIDLPIKANFREGLSVLEYFISTHGARKGLADTALRTADSGYLTRRLVDVAQDVIVREIDCGTDEYVEVGDVRDGTEIIEMLQDRIVGRTAARAIVHPETGAVIVDADEEILEEAAEKIVAAGIKKVAIRSVFTCKTRHGVCKKCYGRNLATGRVVDIGEAIGIIAAQSIGEPGTQLTMRTFHTGGVAGEDITQGLPRVEELFEARRPKGQAIVAEIDGLVEVREVKGRREIEIRGENGERVQYAIPFGARLKVQNGDRVEAGDELSEGSVNPHDLLKIKGPAAVQQYLLREVQRVYRMQGVDINDKHIEVVIRQMLRKVKIDEPGDTEFLPGSLVDILDLEEENRRVEAAGGSPATSKSVLLGITKASLATDSFLSAASFQETTRVLTEAAIKGKVDPLLGLKENVIIGKLIPAGTGMNRYRSVEVDPAVETPAKEVPTH.

The Zn(2+) site is built by Cys-60, Cys-62, Cys-75, and Cys-78. Mg(2+)-binding residues include Asp-449, Asp-451, and Asp-453. The Zn(2+) site is built by Cys-774, Cys-848, Cys-855, and Cys-858.

It belongs to the RNA polymerase beta' chain family. As to quaternary structure, the RNAP catalytic core consists of 2 alpha, 1 beta, 1 beta' and 1 omega subunit. When a sigma factor is associated with the core the holoenzyme is formed, which can initiate transcription. The cofactor is Mg(2+). Zn(2+) is required as a cofactor.

It catalyses the reaction RNA(n) + a ribonucleoside 5'-triphosphate = RNA(n+1) + diphosphate. Its function is as follows. DNA-dependent RNA polymerase catalyzes the transcription of DNA into RNA using the four ribonucleoside triphosphates as substrates. This is DNA-directed RNA polymerase subunit beta' from Desulforudis audaxviator (strain MP104C).